Reading from the N-terminus, the 130-residue chain is Small ribosomal subunit protein uS9 (130 aa).

The disordered stretch occupies residues 109-130; sequence RKKERKKYGQRAARARFQYSKR.

It belongs to the universal ribosomal protein uS9 family.

The chain is Small ribosomal subunit protein uS9 from Oleidesulfovibrio alaskensis (strain ATCC BAA-1058 / DSM 17464 / G20) (Desulfovibrio alaskensis).